The primary structure comprises 435 residues: 3-phosphoshikimate 1-carboxyvinyltransferase (435 aa).

3 residues coordinate 3-phosphoshikimate: Lys-23, Ser-24, and Arg-28. Phosphoenolpyruvate is bound at residue Lys-23. Phosphoenolpyruvate contacts are provided by Gly-97 and Arg-125. 3-phosphoshikimate contacts are provided by Ser-170, Ser-171, Gln-172, Ser-198, Asp-315, Asn-338, and Lys-342. Phosphoenolpyruvate is bound at residue Gln-172. Asp-315 functions as the Proton acceptor in the catalytic mechanism. Residues Arg-346, Arg-388, and Lys-413 each coordinate phosphoenolpyruvate.

This sequence belongs to the EPSP synthase family. In terms of assembly, monomer.

It localises to the cytoplasm. The catalysed reaction is 3-phosphoshikimate + phosphoenolpyruvate = 5-O-(1-carboxyvinyl)-3-phosphoshikimate + phosphate. It participates in metabolic intermediate biosynthesis; chorismate biosynthesis; chorismate from D-erythrose 4-phosphate and phosphoenolpyruvate: step 6/7. Functionally, catalyzes the transfer of the enolpyruvyl moiety of phosphoenolpyruvate (PEP) to the 5-hydroxyl of shikimate-3-phosphate (S3P) to produce enolpyruvyl shikimate-3-phosphate and inorganic phosphate. This is 3-phosphoshikimate 1-carboxyvinyltransferase from Buchnera aphidicola subsp. Cinara cedri (strain Cc).